A 1272-amino-acid polypeptide reads, in one-letter code: Magnesium-chelatase subunit H (1272 aa).

The protein belongs to the Mg-chelatase subunit H family.

It catalyses the reaction protoporphyrin IX + Mg(2+) + ATP + H2O = Mg-protoporphyrin IX + ADP + phosphate + 3 H(+). It participates in porphyrin-containing compound metabolism; bacteriochlorophyll biosynthesis (light-independent). Functionally, involved in bacteriochlorophyll pigment biosynthesis; introduces a magnesium ion into protoporphyrin IX to yield Mg-protoroporphyrin IX. The polypeptide is Magnesium-chelatase subunit H (bchH) (Chlorobaculum parvum (strain DSM 263 / NCIMB 8327) (Chlorobium vibrioforme subsp. thiosulfatophilum)).